Consider the following 364-residue polypeptide: MEINIITNKINKLIQRKKDLKRYLDYVAKSTRILEIDLELSSTEIWKKKEYVHNLNKEKNLLNIIINKINNIEKNIKEMIIFLDLAIETKDNAIIQEISEEIKKIAEKIQELEFYRMFSNQHDHCNCYIDVQAGSGGVDAQDWSKILLRMYLKWSDKKGFKTEIIEESTGEIVGIKSSTIKVSGQYAFGWLRTETGIHRLIRKSPFDSGKRRHTSFSSIFIYPDIEDKINIEINPSDLRIDVYRASGAGGQHVNRTESAVRITHLPTNIVTQCQNNRSQHKNKEQAIKQMKSKLYEMKIKEKKEKQKKIEKNKSDISWGNQIRSYILDNSKIKDLRTGVEKYNVQSVLDGDLDDFIEQSLIMGL.

An N5-methylglutamine modification is found at Gln251.

Belongs to the prokaryotic/mitochondrial release factor family. Post-translationally, methylated by PrmC. Methylation increases the termination efficiency of RF2.

The protein localises to the cytoplasm. Functionally, peptide chain release factor 2 directs the termination of translation in response to the peptide chain termination codons UGA and UAA. This Buchnera aphidicola subsp. Schizaphis graminum (strain Sg) protein is Peptide chain release factor 2 (prfB).